Consider the following 340-residue polypeptide: Probable HTH-type transcriptional regulator EndR (340 aa).

An HTH lacI-type domain is found at 1 to 58 (MVTTMKEVAERAGVSKSTVSQFLQKRYNYMSENTKKKIEQAIEDLSYIPNEVARSLKQ). Positions 5-24 (MKEVAERAGVSKSTVSQFLQ) form a DNA-binding region, H-T-H motif.

Putative repressor of the endoglucanase operon. The protein is Probable HTH-type transcriptional regulator EndR (endR) of Paenibacillus polymyxa (Bacillus polymyxa).